Consider the following 477-residue polypeptide: tRNA-2-methylthio-N(6)-dimethylallyladenosine synthase (477 aa).

In terms of domain architecture, MTTase N-terminal spans 13–130 (GGLFIKTYGC…LPAMIEEALA (118 aa)). Positions 22, 59, 93, 178, 182, and 185 each coordinate [4Fe-4S] cluster. Residues 164-396 (ESNGVSAFVS…QAMLNEQTAA (233 aa)) form the Radical SAM core domain. In terms of domain architecture, TRAM spans 399 to 462 (EGMVGTTQRV…ANSLKGKLVA (64 aa)).

The protein belongs to the methylthiotransferase family. MiaB subfamily. In terms of assembly, monomer. Requires [4Fe-4S] cluster as cofactor.

The protein localises to the cytoplasm. It catalyses the reaction N(6)-dimethylallyladenosine(37) in tRNA + (sulfur carrier)-SH + AH2 + 2 S-adenosyl-L-methionine = 2-methylsulfanyl-N(6)-dimethylallyladenosine(37) in tRNA + (sulfur carrier)-H + 5'-deoxyadenosine + L-methionine + A + S-adenosyl-L-homocysteine + 2 H(+). Its function is as follows. Catalyzes the methylthiolation of N6-(dimethylallyl)adenosine (i(6)A), leading to the formation of 2-methylthio-N6-(dimethylallyl)adenosine (ms(2)i(6)A) at position 37 in tRNAs that read codons beginning with uridine. This is tRNA-2-methylthio-N(6)-dimethylallyladenosine synthase from Hydrogenovibrio crunogenus (strain DSM 25203 / XCL-2) (Thiomicrospira crunogena).